The sequence spans 779 residues: Catalase-peroxidase (779 aa).

A cross-link (tryptophyl-tyrosyl-methioninium (Trp-Tyr) (with M-296)) is located at residues 148 to 270 (WHSAGTYRIT…LGAVQMGLIY (123 aa)). His-149 (proton acceptor) is an active-site residue. Residues 270-296 (YVNPEGPNGKPDPIAAAKDIRETFFRM) constitute a cross-link (tryptophyl-tyrosyl-methioninium (Tyr-Met) (with W-148)). Residue His-311 participates in heme b binding.

The protein belongs to the peroxidase family. Peroxidase/catalase subfamily. As to quaternary structure, homodimer or homotetramer. The cofactor is heme b. Post-translationally, formation of the three residue Trp-Tyr-Met cross-link is important for the catalase, but not the peroxidase activity of the enzyme.

The enzyme catalyses H2O2 + AH2 = A + 2 H2O. It carries out the reaction 2 H2O2 = O2 + 2 H2O. Its function is as follows. Bifunctional enzyme with both catalase and broad-spectrum peroxidase activity. The chain is Catalase-peroxidase from Bradyrhizobium diazoefficiens (strain JCM 10833 / BCRC 13528 / IAM 13628 / NBRC 14792 / USDA 110).